A 56-amino-acid polypeptide reads, in one-letter code: Large ribosomal subunit protein bL33 (56 aa).

This sequence belongs to the bacterial ribosomal protein bL33 family.

This chain is Large ribosomal subunit protein bL33, found in Orientia tsutsugamushi (strain Ikeda) (Rickettsia tsutsugamushi).